Here is a 265-residue protein sequence, read N- to C-terminus: Transcription factor BHLH062 (265 aa).

Residues 1 to 26 are disordered; that stretch reads MVPRDRVNAAAAGGGGEGRLVQSGIV. A basic motif; degenerate region spans residues 35–48; that stretch reads PKRIHKSEREKLKR. The 51-residue stretch at 35 to 85 folds into the bHLH domain; that stretch reads PKRIHKSEREKLKRDKQNDLFNELGNLLEPDRQNNGKACVLGETTRILKDL. The segment at 49–85 is helix-loop-helix motif; the sequence is DKQNDLFNELGNLLEPDRQNNGKACVLGETTRILKDL. Residues 75-130 adopt a coiled-coil conformation; the sequence is LGETTRILKDLLSQVESLRKENSSLKNESHYVALERNELHDDNSMLRTEILELQNE. The interval 200-265 is disordered; the sequence is ESATSEDSEP…TNEEDRIGRS (66 aa). A compositionally biased stretch (basic and acidic residues) spans 210-220; sequence SQEHGISDHVT. Residues 245–256 are compositionally biased toward polar residues; sequence QDQQCSSGTSGT.

Belongs to the bHLH protein family. As to quaternary structure, interacts with TIFY11A/JAZ9.

Its subcellular location is the nucleus. Functionally, transcription factor that plays a positive role in salt stress tolerance. Interacts with TIFY11A/JAZ9 and binds to the promoter of some potassium ion transporter genes to regulate potassium homeostasis during salt stress. The sequence is that of Transcription factor BHLH062 from Oryza sativa subsp. japonica (Rice).